A 284-amino-acid polypeptide reads, in one-letter code: Bifunctional protein FolD 1 (284 aa).

NADP(+)-binding positions include 166–168 (GAS), Ser-191, and Ile-232.

The protein belongs to the tetrahydrofolate dehydrogenase/cyclohydrolase family. As to quaternary structure, homodimer.

The catalysed reaction is (6R)-5,10-methylene-5,6,7,8-tetrahydrofolate + NADP(+) = (6R)-5,10-methenyltetrahydrofolate + NADPH. It carries out the reaction (6R)-5,10-methenyltetrahydrofolate + H2O = (6R)-10-formyltetrahydrofolate + H(+). The protein operates within one-carbon metabolism; tetrahydrofolate interconversion. Its function is as follows. Catalyzes the oxidation of 5,10-methylenetetrahydrofolate to 5,10-methenyltetrahydrofolate and then the hydrolysis of 5,10-methenyltetrahydrofolate to 10-formyltetrahydrofolate. In Hydrogenovibrio crunogenus (strain DSM 25203 / XCL-2) (Thiomicrospira crunogena), this protein is Bifunctional protein FolD 1.